We begin with the raw amino-acid sequence, 143 residues long: Sporulation-specific cell division protein SsgB (143 aa).

This sequence belongs to the SsgA family. Interacts with SsgA. Interacts with FtsZ (via N-terminus).

Its subcellular location is the cell septum. In terms of biological role, involved in sporulation-specific cell division. Required for early stages of sporulation. Important in the process of growth cessation prior to sporulation-specific cell division. Recruits cell division protein FtsZ to the future septum sites and tethers the contractile ring structure (Z ring) to the cytoplasmic membrane during sporulation. Stimulates polymerization and filament length of FtsZ in vitro. The chain is Sporulation-specific cell division protein SsgB from Frankia casuarinae (strain DSM 45818 / CECT 9043 / HFP020203 / CcI3).